Reading from the N-terminus, the 301-residue chain is GTPase Era (301 aa).

The Era-type G domain occupies 7–175 (YCGFIAIVGR…AAIVRKHLPE (169 aa)). A G1 region spans residues 15–22 (GRPNVGKS). GTP is bound at residue 15 to 22 (GRPNVGKS). Residues 41-45 (QTTRH) are G2. The interval 62 to 65 (DTPG) is G3. Residues 62 to 66 (DTPGL) and 124 to 127 (NKVD) contribute to the GTP site. Positions 124–127 (NKVD) are G4. The segment at 154–156 (ISA) is G5. Residues 206–283 (LGAELPYSVT…HLELWVKVKS (78 aa)) enclose the KH type-2 domain.

This sequence belongs to the TRAFAC class TrmE-Era-EngA-EngB-Septin-like GTPase superfamily. Era GTPase family. As to quaternary structure, monomer.

The protein resides in the cytoplasm. Its subcellular location is the cell inner membrane. Functionally, an essential GTPase that binds both GDP and GTP, with rapid nucleotide exchange. Plays a role in 16S rRNA processing and 30S ribosomal subunit biogenesis and possibly also in cell cycle regulation and energy metabolism. This chain is GTPase Era, found in Escherichia fergusonii (strain ATCC 35469 / DSM 13698 / CCUG 18766 / IAM 14443 / JCM 21226 / LMG 7866 / NBRC 102419 / NCTC 12128 / CDC 0568-73).